Here is a 264-residue protein sequence, read N- to C-terminus: PDZ domain-containing protein 9 (264 aa).

A PDZ domain is found at 30-109 (QTKLTVGSLG…GTVLQIKVYR (80 aa)).

This chain is PDZ domain-containing protein 9 (PDZD9), found in Homo sapiens (Human).